Here is a 367-residue protein sequence, read N- to C-terminus: MNQDNCRIKVNLKNNPYEVVVGSEILYTIGEELLRINIRTGEKILIVTNPDVSKPYSRRFITSLKEAGYDANLLILEAGENKKNYESIALIHNAAYEHQLDRGSLIIALGGGVIGDMAGFAAATWLRGIDFVQVPTTLLAMVDASVGGKTGVNHPKGKNLIGAFHQPKLVLIDINTLKTLPQREFRSGMAEIIKYGVIKDLELFNKLENEEDLSNIYSIKECVLLELIKISVSIKARIVEKDEKESGLRAILNYGHTFGHVIETLCGYGHWLHGEAVSMGMVLIGQLALRKNLWNVDDALRQEKLLTKAGLPISWPKINNEDVLRTLKGDKKVDKGNIRLIVPLGIGMVEILNDVSENEIKSLLESI.

Residues 112 to 116, 136 to 137, Lys-149, Lys-158, and 176 to 179 each bind NAD(+); these read GVIGD, TT, and TLKT. Zn(2+) is bound by residues Glu-191, His-256, and His-273.

This sequence belongs to the sugar phosphate cyclases superfamily. Dehydroquinate synthase family. Requires NAD(+) as cofactor. The cofactor is Co(2+). It depends on Zn(2+) as a cofactor.

It is found in the cytoplasm. The enzyme catalyses 7-phospho-2-dehydro-3-deoxy-D-arabino-heptonate = 3-dehydroquinate + phosphate. Its pathway is metabolic intermediate biosynthesis; chorismate biosynthesis; chorismate from D-erythrose 4-phosphate and phosphoenolpyruvate: step 2/7. In terms of biological role, catalyzes the conversion of 3-deoxy-D-arabino-heptulosonate 7-phosphate (DAHP) to dehydroquinate (DHQ). The sequence is that of 3-dehydroquinate synthase from Prochlorococcus marinus (strain SARG / CCMP1375 / SS120).